The following is a 338-amino-acid chain: Ketol-acid reductoisomerase (NADP(+)) (338 aa).

One can recognise a KARI N-terminal Rossmann domain in the interval 1 to 181 (MKVFYDKDAD…GGGRAGIIET (181 aa)). NADP(+)-binding positions include 24–27 (YGSQ), arginine 47, and serine 52. Histidine 107 is a catalytic residue. Glycine 133 provides a ligand contact to NADP(+). One can recognise a KARI C-terminal knotted domain in the interval 182 to 327 (NFREETETDL…GKLRAMMPWI (146 aa)). 4 residues coordinate Mg(2+): aspartate 190, glutamate 194, glutamate 226, and glutamate 230. Serine 251 contributes to the substrate binding site.

Belongs to the ketol-acid reductoisomerase family. Mg(2+) serves as cofactor.

It carries out the reaction (2R)-2,3-dihydroxy-3-methylbutanoate + NADP(+) = (2S)-2-acetolactate + NADPH + H(+). The enzyme catalyses (2R,3R)-2,3-dihydroxy-3-methylpentanoate + NADP(+) = (S)-2-ethyl-2-hydroxy-3-oxobutanoate + NADPH + H(+). The protein operates within amino-acid biosynthesis; L-isoleucine biosynthesis; L-isoleucine from 2-oxobutanoate: step 2/4. It functions in the pathway amino-acid biosynthesis; L-valine biosynthesis; L-valine from pyruvate: step 2/4. Involved in the biosynthesis of branched-chain amino acids (BCAA). Catalyzes an alkyl-migration followed by a ketol-acid reduction of (S)-2-acetolactate (S2AL) to yield (R)-2,3-dihydroxy-isovalerate. In the isomerase reaction, S2AL is rearranged via a Mg-dependent methyl migration to produce 3-hydroxy-3-methyl-2-ketobutyrate (HMKB). In the reductase reaction, this 2-ketoacid undergoes a metal-dependent reduction by NADPH to yield (R)-2,3-dihydroxy-isovalerate. In Cupriavidus metallidurans (strain ATCC 43123 / DSM 2839 / NBRC 102507 / CH34) (Ralstonia metallidurans), this protein is Ketol-acid reductoisomerase (NADP(+)).